Here is a 201-residue protein sequence, read N- to C-terminus: dTTP/UTP pyrophosphatase (201 aa).

Catalysis depends on aspartate 81, which acts as the Proton acceptor.

Belongs to the Maf family. YhdE subfamily. It depends on a divalent metal cation as a cofactor.

It is found in the cytoplasm. The catalysed reaction is dTTP + H2O = dTMP + diphosphate + H(+). It carries out the reaction UTP + H2O = UMP + diphosphate + H(+). In terms of biological role, nucleoside triphosphate pyrophosphatase that hydrolyzes dTTP and UTP. May have a dual role in cell division arrest and in preventing the incorporation of modified nucleotides into cellular nucleic acids. This Dechloromonas aromatica (strain RCB) protein is dTTP/UTP pyrophosphatase.